The sequence spans 224 residues: GrpE protein homolog 2, mitochondrial (224 aa).

A mitochondrion-targeting transit peptide spans 1–31 (MAARLLWAVRRRMQPLAAHAASEGRGWLHPF). Position 141 is an N6-acetyllysine (K141).

Belongs to the GrpE family. In terms of assembly, probable component of the PAM complex at least composed of a mitochondrial HSP70 protein, GRPEL1 or GRPEL2, TIMM44, TIMM16/PAM16 and TIMM14/DNAJC19.

The protein resides in the mitochondrion matrix. Its function is as follows. Essential component of the PAM complex, a complex required for the translocation of transit peptide-containing proteins from the inner membrane into the mitochondrial matrix in an ATP-dependent manner. Seems to control the nucleotide-dependent binding of mitochondrial HSP70 to substrate proteins. Stimulates ATPase activity of mt-HSP70. May also serve to modulate the interconversion of oligomeric (inactive) and monomeric (active) forms of mt-HSP70. The polypeptide is GrpE protein homolog 2, mitochondrial (GRPEL2) (Bos taurus (Bovine)).